The following is an 830-amino-acid chain: Venom phosphodiesterase (830 aa).

SMB domains are found at residues 7 to 50 (PLES…VLPT) and 51 to 95 (QSWS…RETS). Disulfide bonds link Cys-11–Cys-15, Cys-11–Cys-28, Cys-15–Cys-46, Cys-26–Cys-28, Cys-26–Cys-39, Cys-32–Cys-38, Cys-39–Cys-46, Cys-55–Cys-60, Cys-55–Cys-72, Cys-60–Cys-90, Cys-70–Cys-72, Cys-70–Cys-83, Cys-76–Cys-82, Cys-83–Cys-90, Cys-101–Cys-147, and Cys-109–Cys-321. Residue Asn-16 is glycosylated (N-linked (GlcNAc...) asparagine). A Cell attachment site motif is present at residues 35–37 (RKA). A divalent metal cation-binding residues include Asp-124 and Thr-162. The active-site AMP-threonine intermediate is the Thr-162. Asn-193, Asn-236, and Asn-247 each carry an N-linked (GlcNAc...) asparagine glycan. Position 248 (Lys-248) interacts with AMP. A divalent metal cation-binding residues include Asp-282, His-286, Asp-329, and His-330. His-286 serves as a coordination point for AMP. 6 disulfides stabilise this stretch: Cys-337–Cys-434, Cys-385–Cys-772, Cys-518–Cys-575, Cys-531–Cys-632, Cys-533–Cys-617, and Cys-740–Cys-750. His-439 provides a ligand contact to a divalent metal cation. The N-linked (GlcNAc...) asparagine glycan is linked to Asn-489. 2 N-linked (GlcNAc...) asparagine glycosylation sites follow: Asn-723 and Asn-742.

It belongs to the nucleotide pyrophosphatase/phosphodiesterase family. As to quaternary structure, monomer cleaved in two subunits; disulfide-linked. Is synthesized as a single-chain protein and is subsequently cleaved to form a two-subunit protein held together with disulfide bonds. It depends on a divalent metal cation as a cofactor. Expressed by venom gland.

The protein resides in the secreted. The enzyme catalyses ADP + H2O = AMP + phosphate + H(+). Functionally, hydrolyzes ADP with high activity. Shows weak or no activity on 5'-AMP, 5'-GMP, 3'-AMP, ATP, cAMP, and cGMP. Is devoid of monophosphatase and proteinase activities. Dose-dependently inhibits platelet aggregation induced by ADP and collagen. In Naja atra (Chinese cobra), this protein is Venom phosphodiesterase.